Here is a 474-residue protein sequence, read N- to C-terminus: Glutamate--tRNA ligase 1 (474 aa).

The 'HIGH' region signature appears at Pro-11 to Gly-21. Basic and acidic residues predominate over residues Thr-113–Ser-133. The segment at Thr-113–Pro-136 is disordered. Residues Lys-240 to Arg-244 carry the 'KMSKS' region motif. Position 243 (Lys-243) interacts with ATP.

This sequence belongs to the class-I aminoacyl-tRNA synthetase family. Glutamate--tRNA ligase type 1 subfamily. Monomer.

The protein resides in the cytoplasm. The catalysed reaction is tRNA(Glu) + L-glutamate + ATP = L-glutamyl-tRNA(Glu) + AMP + diphosphate. Its function is as follows. Catalyzes the attachment of glutamate to tRNA(Glu) in a two-step reaction: glutamate is first activated by ATP to form Glu-AMP and then transferred to the acceptor end of tRNA(Glu). This Methylorubrum extorquens (strain PA1) (Methylobacterium extorquens) protein is Glutamate--tRNA ligase 1.